The chain runs to 595 residues: DNA mismatch repair protein MutL (595 aa).

The protein belongs to the DNA mismatch repair MutL/HexB family.

This protein is involved in the repair of mismatches in DNA. It is required for dam-dependent methyl-directed DNA mismatch repair. May act as a 'molecular matchmaker', a protein that promotes the formation of a stable complex between two or more DNA-binding proteins in an ATP-dependent manner without itself being part of a final effector complex. This is DNA mismatch repair protein MutL from Rhodopseudomonas palustris (strain ATCC BAA-98 / CGA009).